A 1073-amino-acid chain; its full sequence is MKLLYTEISYSMTEILVKEARAYADKGYRVFYIAPNSLSFEKERSVLALLPEQGSFAITVTRFEQMARYFTLAKAANRQALDDNGLAMIFYRVLMQLQEDELKVFHRLRTDQAFIAQLVELYKELQAANLTAFDLTTLDRPEKQEDLITIMTKAEQLIAQGDYDQSSRLAQLAEAIKSKSLDDELRQTVLVIDGFTRFSAEEEQLLALLNEACEEIVIGAYISQKAYRLAFTKGNLYEASLAFIQQLAQQFQTKPIYTTSEKVFDVSFSRLTQLLEANHDYSQLDWQLSAKDKSKVVIWQALNQKEELEHVTKAIREKLYQGYRYKDMLVLLGDVASYQLQIGPIFEKFEIPYYIGKQEPMSAHPLVQFVESLERGRRYNWRREDIVNLLKSGLFGRFQEGELDQLEQYLVFADIQGFTKFSRPFTLNSSRQYPLPLLNQLRLAVVTPLQQLFKSQKQLGASLLDKLMTFFKTIQLADNFEALAGSRREADREKDEEVWKTFTGILETFYQVFGQEKMTLADCLALIKMGMQTAHYRTVPATLDVVSIKSYDLVEPHSKPFVFAIGLSRSHFPKQTKNTSLISDQERASINEQTASYQRLDVPSFENIKKNHQTALSLFNAATQELVLSLPTSLTNSSDDVSPYLKELIALGVPVIEKGKNRLSHSAADIGNYKALLSRLVAINRQGIADDMTSEDRNFWTVALRYLKRRLADEQLSLPAFEHHLTTKPVAPEVIETRFPSQQPLSLSSSALTVFYNNQYKYFLKYVLGLQEPESIHPDARIHGQYLHRIFELVTKDRSNAAFDQKLGAAIAAVNQQSAFQQVYQADAEGRYSLEVLKGIAYSTAPVLNLNQGMQVAKQEEAFELALGHQALIRGVIDRIDQLADGRLGIVDYKSSARVFDIGAFYNGLSPQLVTYLAALKNKGQGLFGAMYLHMQEPRLSLSDFKVLDDQLVAAAYKELTYKGIFLAQAKEYLANGSYHLNNTLYETDELETLLAYNEQLYLSAVKQIKTGHFLINPYTADGKSVQGDQLKAITRFEADLDLGYARRLVVLPAKERRQAFLTRMNEEIKHED.

It belongs to the helicase family. AddB/RexB type 2 subfamily. As to quaternary structure, heterodimer of AddA and RexB. The cofactor is Mg(2+).

In terms of biological role, the heterodimer acts as both an ATP-dependent DNA helicase and an ATP-dependent, dual-direction single-stranded exonuclease. Recognizes the chi site generating a DNA molecule suitable for the initiation of homologous recombination. This subunit has 5' -&gt; 3' nuclease activity but not helicase activity. This Streptococcus equi subsp. zooepidemicus (strain MGCS10565) protein is ATP-dependent helicase/deoxyribonuclease subunit B.